The sequence spans 370 residues: 3-dehydroquinate synthase (370 aa).

Residues 112 to 116 (GVVGD), 136 to 137 (TS), lysine 149, lysine 158, and 176 to 179 (TLRT) each bind NAD(+). 3 residues coordinate Zn(2+): glutamate 191, histidine 254, and histidine 276.

It belongs to the sugar phosphate cyclases superfamily. Dehydroquinate synthase family. Requires Co(2+) as cofactor. Zn(2+) is required as a cofactor. The cofactor is NAD(+).

It is found in the cytoplasm. The enzyme catalyses 7-phospho-2-dehydro-3-deoxy-D-arabino-heptonate = 3-dehydroquinate + phosphate. It functions in the pathway metabolic intermediate biosynthesis; chorismate biosynthesis; chorismate from D-erythrose 4-phosphate and phosphoenolpyruvate: step 2/7. Catalyzes the conversion of 3-deoxy-D-arabino-heptulosonate 7-phosphate (DAHP) to dehydroquinate (DHQ). The polypeptide is 3-dehydroquinate synthase (Xanthomonas oryzae pv. oryzae (strain MAFF 311018)).